Here is a 789-residue protein sequence, read N- to C-terminus: Subtilisin-like protease Glyma18g48580 (789 aa).

The first 27 residues, 1–27 (MGSSIFCLHLILSSFFLFTFLLAAVNG), serve as a signal peptide directing secretion. One can recognise an Inhibitor I9 domain in the interval 32-116 (YIVYMGAHSH…VFLSKEHKLH (85 aa)). One can recognise a Peptidase S8 domain in the interval 120 to 644 (SWEFLGLHRR…SGHVRPDLAI (525 aa)). Active-site charge relay system residues include D150 and H224. The 89-residue stretch at 401-489 (TFRDAQLCRR…RPHGVKTTAI (89 aa)) folds into the PA domain. Residues 468-499 (STVNTPPRRAKSRPHGVKTTAIGDEDDPLKTG) are disordered. S576 acts as the Charge relay system in catalysis.

It belongs to the peptidase S8 family. As to expression, expressed in roots, stems, flowers and young leaves. Barely detectable in matures leaves.

Its subcellular location is the secreted. Functionally, produces a rapid alkalinization of the cellular media and the induction of defense-related genes, including chitinase 1b, chalcone synthase and CYP93A1. The receptor for GmSubPep is probably different from the receptor(s) for GmPep890 and GmPep914. In Glycine max (Soybean), this protein is Subtilisin-like protease Glyma18g48580.